The sequence spans 224 residues: Dimethyl sulfoxide reductase transcriptional activator (224 aa).

The 52-residue stretch at 158–209 (LTDKQREAAAAAVAKGYYATPRGADLSDLATALGISKSAVSQRLSAVESKLA) folds into the HTH bat-type domain.

Functionally, involved in activating dmsEABCD gene expression related to dimethyl sulfoxide (DMSO) reductase. Required for anaerobic respiration on dimethyl sulfoxide (DMSO) and trimethylamine N-oxide (TMAO). The sequence is that of Dimethyl sulfoxide reductase transcriptional activator (dmsR) from Halobacterium salinarum (strain ATCC 700922 / JCM 11081 / NRC-1) (Halobacterium halobium).